We begin with the raw amino-acid sequence, 297 residues long: N-acetylneuraminate lyase (297 aa).

The aceneuramate site is built by Ser47 and Thr48. Tyr137 acts as the Proton donor in catalysis. Lys165 functions as the Schiff-base intermediate with substrate in the catalytic mechanism. Aceneuramate contacts are provided by Thr167, Gly189, Asp191, Glu192, and Ser208.

Belongs to the DapA family. NanA subfamily. In terms of assembly, homotetramer.

It localises to the cytoplasm. It catalyses the reaction aceneuramate = aldehydo-N-acetyl-D-mannosamine + pyruvate. It functions in the pathway amino-sugar metabolism; N-acetylneuraminate degradation; D-fructose 6-phosphate from N-acetylneuraminate: step 1/5. Functionally, catalyzes the reversible aldol cleavage of N-acetylneuraminic acid (sialic acid; Neu5Ac) to form pyruvate and N-acetylmannosamine (ManNAc) via a Schiff base intermediate. The chain is N-acetylneuraminate lyase from Escherichia coli O139:H28 (strain E24377A / ETEC).